The following is a 300-amino-acid chain: Ribosomal protein L11 methyltransferase (300 aa).

Residues Thr-152, Gly-173, Asp-195, and Asn-234 each contribute to the S-adenosyl-L-methionine site.

The protein belongs to the methyltransferase superfamily. PrmA family.

The protein localises to the cytoplasm. It carries out the reaction L-lysyl-[protein] + 3 S-adenosyl-L-methionine = N(6),N(6),N(6)-trimethyl-L-lysyl-[protein] + 3 S-adenosyl-L-homocysteine + 3 H(+). In terms of biological role, methylates ribosomal protein L11. This chain is Ribosomal protein L11 methyltransferase, found in Burkholderia multivorans (strain ATCC 17616 / 249).